The chain runs to 162 residues: Ubiquitin-fold modifier-conjugating enzyme 1 (162 aa).

Catalysis depends on C115, which acts as the Glycyl thioester intermediate.

The protein belongs to the ubiquitin-conjugating enzyme family. UFC1 subfamily. Interacts with uba-5. As to expression, expressed in the intestine.

Its function is as follows. E2-like enzyme which forms an intermediate with ufm-1. The intermediate is formed via a thioester linkage. This is Ubiquitin-fold modifier-conjugating enzyme 1 from Caenorhabditis elegans.